Here is a 255-residue protein sequence, read N- to C-terminus: Proteasome subunit alpha type-3 (255 aa).

Residue Ser2 is modified to N-acetylserine. An N6-acetyllysine mark is found at Lys57, Lys206, and Lys230. Ser243 and Ser250 each carry phosphoserine.

Belongs to the peptidase T1A family. As to quaternary structure, the 26S proteasome consists of a 20S proteasome core and two 19S regulatory subunits. The 20S proteasome core is a barrel-shaped complex made of 28 subunits that are arranged in four stacked rings. The two outer rings are each formed by seven alpha subunits, and the two inner rings are formed by seven beta subunits. The proteolytic activity is exerted by three beta-subunits PSMB5, PSMB6 and PSMB7. Interacts with AURKB. Interacts with CDKN1A. Interacts with MDM2 and RB1. Interacts with the C-terminus of TBXA2R isoform 2. Interacts with DNAJB2. In terms of assembly, (Microbial infection) Interacts with HIV-1 Tat protein. (Microbial infection) Interacts with hepatitis C virus (HCV) F protein. As to quaternary structure, (Microbial infection) Interacts with Epstein-Barr virus EBNA3 proteins.

It is found in the cytoplasm. The protein resides in the nucleus. Its function is as follows. Component of the 20S core proteasome complex involved in the proteolytic degradation of most intracellular proteins. This complex plays numerous essential roles within the cell by associating with different regulatory particles. Associated with two 19S regulatory particles, forms the 26S proteasome and thus participates in the ATP-dependent degradation of ubiquitinated proteins. The 26S proteasome plays a key role in the maintenance of protein homeostasis by removing misfolded or damaged proteins that could impair cellular functions, and by removing proteins whose functions are no longer required. Associated with the PA200 or PA28, the 20S proteasome mediates ubiquitin-independent protein degradation. This type of proteolysis is required in several pathways including spermatogenesis (20S-PA200 complex) or generation of a subset of MHC class I-presented antigenic peptides (20S-PA28 complex). Binds to the C-terminus of CDKN1A and thereby mediates its degradation. Negatively regulates the membrane trafficking of the cell-surface thromboxane A2 receptor (TBXA2R) isoform 2. This is Proteasome subunit alpha type-3 from Homo sapiens (Human).